The sequence spans 326 residues: Ornithine carbamoyltransferase (326 aa).

Residues 54-57 (STRT), Q81, R105, and 132-135 (HPTQ) each bind carbamoyl phosphate. L-ornithine contacts are provided by residues N164, D225, and 229 to 230 (SM). Carbamoyl phosphate is bound by residues 266-267 (CL) and R311.

The protein belongs to the aspartate/ornithine carbamoyltransferase superfamily. OTCase family.

The protein localises to the cytoplasm. It carries out the reaction carbamoyl phosphate + L-ornithine = L-citrulline + phosphate + H(+). It participates in amino-acid biosynthesis; L-arginine biosynthesis; L-arginine from L-ornithine and carbamoyl phosphate: step 1/3. In terms of biological role, reversibly catalyzes the transfer of the carbamoyl group from carbamoyl phosphate (CP) to the N(epsilon) atom of ornithine (ORN) to produce L-citrulline. In Streptococcus mutans serotype c (strain ATCC 700610 / UA159), this protein is Ornithine carbamoyltransferase (argF).